A 244-amino-acid chain; its full sequence is Salivary antigen-5 (244 aa).

Residues 1 to 23 (MAKAHSSLVFCLLALALVRFAQA) form the signal peptide. An SCP domain is found at 46-202 (LDFHNKFREL…WYTGYLVCNY (157 aa)). Residues Asn-106 and Asn-172 are each glycosylated (N-linked (GlcNAc...) asparagine).

It belongs to the CRISP family. Venom allergen 5-like subfamily. As to expression, salivary gland (at protein level).

It localises to the secreted. Functionally, inhibits host platelet aggregation induced by low doses of collagen. In Triatoma infestans (Assassin bug), this protein is Salivary antigen-5.